The primary structure comprises 219 residues: N-(5'-phosphoribosyl)anthranilate isomerase (219 aa).

This sequence belongs to the TrpF family.

It carries out the reaction N-(5-phospho-beta-D-ribosyl)anthranilate = 1-(2-carboxyphenylamino)-1-deoxy-D-ribulose 5-phosphate. It functions in the pathway amino-acid biosynthesis; L-tryptophan biosynthesis; L-tryptophan from chorismate: step 3/5. The protein is N-(5'-phosphoribosyl)anthranilate isomerase of Mesorhizobium japonicum (strain LMG 29417 / CECT 9101 / MAFF 303099) (Mesorhizobium loti (strain MAFF 303099)).